Here is a 355-residue protein sequence, read N- to C-terminus: NAD-dependent protein deacylase sirtuin-6 (355 aa).

The residue at position 2 (Ser2) is an N-acetylserine. Phosphoserine is present on Ser10. Residues 27 to 272 (PEELERKVWE…TQLMKHLGLE (246 aa)) form the Deacetylase sirtuin-type domain. An N6-acetyllysine modification is found at Lys33. NAD(+) is bound by residues Ala53, Thr57, Phe64, Arg65, Trp71, Gln113, and His133. Residue His133 is the Proton acceptor of the active site. Residues Cys141, Cys144, and Cys166 each contribute to the Zn(2+) site. Lys170 is covalently cross-linked (Glycyl lysine isopeptide (Lys-Gly) (interchain with G-Cter in ubiquitin)). Cys177 lines the Zn(2+) pocket. Residues Gly214, Ser216, Asn240, Gln242, and Val258 each contribute to the NAD(+) site. The disordered stretch occupies residues 284–355 (KALPPLPRPP…KRVKAEVTPS (72 aa)). Over residues 287–296 (PPLPRPPTPK) the composition is skewed to pro residues. Thr294 is modified (phosphothreonine). Phosphoserine is present on residues Ser303 and Ser330.

This sequence belongs to the sirtuin family. Class IV subfamily. Homodimer; binds to nucleosomes and DNA ends as a homodimer. Interacts with RELA; interferes with RELA binding to target DNA. Interacts with SMARCA5; promoting recruitment of SMARCA5/SNF2H to double-strand breaks (DSBs) sites. Interacts with the mTORC2 complex; preventing the ability of SIRT6 to deacetylate FOXO1. Interacts with the CLOCK-BMAL1 complex; recruited by the CLOCK-BMAL1 complex to regulate expression of clock-controlled genes. Interacts with CSNK2A2; preventing CSNK2A2 localization to the nucleus. In terms of processing, acetylated at Lys-33. Deacetylation at Lys-33 by SIRT1 promotes homomultimerization and binding to double-strand breaks (DSBs) sites. Phosphorylation at Ser-10 by MAPK8/JNK1 in response to oxidative stress stimulates the mono-ADP-ribosyltransferase activity on PARP1, leading to PARP1 recruitment to double-strand breaks (DSBs). Post-translationally, monoubiquitinated at Lys-170 by STUB1/CHIP, preventing its degradation by the proteasome. In terms of processing, sumoylated, leading to specifically decrease ability to deacetylate histone H3 at 'Lys-56' (H3K56ac).

The protein localises to the nucleus. Its subcellular location is the chromosome. The protein resides in the telomere. It localises to the endoplasmic reticulum. It carries out the reaction N(6)-acetyl-L-lysyl-[protein] + NAD(+) + H2O = 2''-O-acetyl-ADP-D-ribose + nicotinamide + L-lysyl-[protein]. The enzyme catalyses N(6)-tetradecanoyl-L-lysyl-[protein] + NAD(+) + H2O = 2''-O-tetradecanoyl-ADP-D-ribose + nicotinamide + L-lysyl-[protein]. The catalysed reaction is N(6)-hexadecanoyl-L-lysyl-[protein] + NAD(+) + H2O = 2''-O-hexadecanoyl-ADP-D-ribose + nicotinamide + L-lysyl-[protein]. It catalyses the reaction L-lysyl-[protein] + NAD(+) = N(6)-(ADP-D-ribosyl)-L-lysyl-[protein] + nicotinamide + H(+). It carries out the reaction L-arginyl-[protein] + NAD(+) = N(omega)-(ADP-D-ribosyl)-L-arginyl-[protein] + nicotinamide + H(+). With respect to regulation, compared to the defatty-acylase activity, the protein deacetylase activity is weak in vitro, and requires activation. The histone deacetylase activity is strongly activated upon binding to nucleosomes and chromatin in vivo. Two molecules of SIRT6 associate with the acidic patch of one nucleosome, while the C-terminal disordered region of SIRT6 associates with nucleosomal DNA, leading to efficient histone deacetylation. The protein-lysine deacetylase activity is also activated by long-chain free fatty-acids. Its function is as follows. NAD-dependent protein deacetylase, deacylase and mono-ADP-ribosyltransferase that plays an essential role in DNA damage repair, telomere maintenance, metabolic homeostasis, inflammation, tumorigenesis and aging. Displays protein-lysine deacetylase or defatty-acylase (demyristoylase and depalmitoylase) activity, depending on the context. Acts as a key histone deacetylase by catalyzing deacetylation of histone H3 at 'Lys-9', 'Lys-18' and 'Lys-56' (H3K9ac, H3K18ac and H3K56ac, respectively), suppressing target gene expression of several transcription factors, including NF-kappa-B. Acts as an inhibitor of transcription elongation by mediating deacetylation of H3K9ac and H3K56ac, preventing release of NELFE from chromatin and causing transcriptional pausing. Involved in DNA repair by promoting double-strand break (DSB) repair: acts as a DSB sensor by recognizing and binding DSB sites, leading to (1) recruitment of DNA repair proteins, such as SMARCA5/SNF2H, and (2) deacetylation of histone H3K9ac and H3K56ac. SIRT6 participation to DSB repair is probably involved in extension of life span. Also promotes DNA repair by deacetylating non-histone proteins, such as DDB2 and p53/TP53. Specifically deacetylates H3K18ac at pericentric heterochromatin, thereby maintaining pericentric heterochromatin silencing at centromeres and protecting against genomic instability and cellular senescence. Involved in telomere maintenance by catalyzing deacetylation of histone H3 in telomeric chromatin, regulating telomere position effect and telomere movement in response to DNA damage. Required for embryonic stem cell differentiation by mediating histone deacetylation of H3K9ac. Plays a major role in metabolism by regulating processes such as glycolysis, gluconeogenesis, insulin secretion and lipid metabolism. Inhibits glycolysis via histone deacetylase activity and by acting as a corepressor of the transcription factor HIF1A, thereby controlling the expression of multiple glycolytic genes. Has tumor suppressor activity by repressing glycolysis, thereby inhibiting the Warburg effect. Also regulates glycolysis and tumorigenesis by mediating deacetylation and nuclear export of non-histone proteins, such as isoform M2 of PKM (PKM2). Acts as a negative regulator of gluconeogenesis by mediating deacetylation of non-histone proteins, such as FOXO1 and KAT2A/GCN5. Promotes beta-oxidation of fatty acids during fasting by catalyzing deacetylation of NCOA2, inducing coactivation of PPARA. Acts as a regulator of lipid catabolism in brown adipocytes, both by catalyzing deacetylation of histones and non-histone proteins, such as FOXO1. Also acts as a regulator of circadian rhythms, both by regulating expression of clock-controlled genes involved in lipid and carbohydrate metabolism, and by catalyzing deacetylation of PER2. The defatty-acylase activity is specifically involved in regulation of protein secretion. Has high activity toward long-chain fatty acyl groups and mediates protein-lysine demyristoylation and depalmitoylation of target proteins, such as RRAS2 and TNF, thereby regulating their secretion. Also acts as a mono-ADP-ribosyltransferase by mediating mono-ADP-ribosylation of PARP1, TRIM28/KAP1 or SMARCC2/BAF170. Mono-ADP-ribosyltransferase activity is involved in DNA repair, cellular senescence, repression of LINE-1 retrotransposon elements and regulation of transcription. The polypeptide is NAD-dependent protein deacylase sirtuin-6 (Castor canadensis (American beaver)).